A 642-amino-acid polypeptide reads, in one-letter code: Threonine--tRNA ligase (642 aa).

Residues 1-61 (MPVITLPDGS…ENDATLAIIT (61 aa)) enclose the TGS domain. Residues 243-534 (DHRKIGKQLD…LTEEFAGFFP (292 aa)) form a catalytic region. Zn(2+) is bound by residues C334, H385, and H511.

This sequence belongs to the class-II aminoacyl-tRNA synthetase family. As to quaternary structure, homodimer. The cofactor is Zn(2+).

The protein resides in the cytoplasm. The catalysed reaction is tRNA(Thr) + L-threonine + ATP = L-threonyl-tRNA(Thr) + AMP + diphosphate + H(+). Its function is as follows. Catalyzes the attachment of threonine to tRNA(Thr) in a two-step reaction: L-threonine is first activated by ATP to form Thr-AMP and then transferred to the acceptor end of tRNA(Thr). Also edits incorrectly charged L-seryl-tRNA(Thr). This Salmonella gallinarum (strain 287/91 / NCTC 13346) protein is Threonine--tRNA ligase.